Reading from the N-terminus, the 673-residue chain is UvrABC system protein B (673 aa).

The Helicase ATP-binding domain maps to 26-183; sequence EGLEDGLAHQ…RRLAELQYTR (158 aa). 39–46 serves as a coordination point for ATP; sequence GVTGSGKT. A Beta-hairpin motif is present at residues 92–115; it reads YYDYYQPEAYVPSSDTFIEKDASV. The Helicase C-terminal domain maps to 431-597; that stretch reads QVDDLLSEIR…GLNKKVVDIL (167 aa). A UVR domain is found at 633–668; it reads QQKIHELEGQMMQHAQNLEFEEAAQIRDQLHQLREL.

Belongs to the UvrB family. As to quaternary structure, forms a heterotetramer with UvrA during the search for lesions. Interacts with UvrC in an incision complex.

Its subcellular location is the cytoplasm. The UvrABC repair system catalyzes the recognition and processing of DNA lesions. A damage recognition complex composed of 2 UvrA and 2 UvrB subunits scans DNA for abnormalities. Upon binding of the UvrA(2)B(2) complex to a putative damaged site, the DNA wraps around one UvrB monomer. DNA wrap is dependent on ATP binding by UvrB and probably causes local melting of the DNA helix, facilitating insertion of UvrB beta-hairpin between the DNA strands. Then UvrB probes one DNA strand for the presence of a lesion. If a lesion is found the UvrA subunits dissociate and the UvrB-DNA preincision complex is formed. This complex is subsequently bound by UvrC and the second UvrB is released. If no lesion is found, the DNA wraps around the other UvrB subunit that will check the other stand for damage. The chain is UvrABC system protein B from Salmonella arizonae (strain ATCC BAA-731 / CDC346-86 / RSK2980).